Here is a 346-residue protein sequence, read N- to C-terminus: Putative D-alanine--D-lactate ligase (346 aa).

In terms of domain architecture, ATP-grasp spans 137-338 (YVVARSAGIA…LSEVIDRTLS (202 aa)). 163–216 (RLTYPVFVKPARSGSSFGVSKVCRPEDLATAVESARRYDTKVLIEAAVVGSEVG) contributes to the ATP binding site. The Mg(2+) site is built by D292, E305, and N307.

It belongs to the D-alanine--D-alanine ligase family. The cofactor is Mg(2+). It depends on Mn(2+) as a cofactor.

Its subcellular location is the cell membrane. Functionally, required for resistance to glycopeptides antibiotics. D-Ala--D-Ala ligase of altered specificity which catalyzes ester bond formation between D-Ala and various D-hydroxy acids; producing a peptidoglycan which does not terminate by D-alanine but by D-lactate, thus preventing vancomycin binding. The polypeptide is Putative D-alanine--D-lactate ligase (Streptomyces coelicolor (strain ATCC BAA-471 / A3(2) / M145)).